Here is a 534-residue protein sequence, read N- to C-terminus: UDP-glucuronosyltransferase 1A4 (534 aa).

Residues 1-28 form the signal peptide; sequence MARGLQVPLPRLATGLLLLLSVQPWAES. N-linked (GlcNAc...) asparagine glycosylation is found at Asn-119, Asn-142, Asn-296, and Asn-348. Residues 492 to 508 traverse the membrane as a helical segment; the sequence is VIGFLLAVVLTVAFITF.

The protein belongs to the UDP-glycosyltransferase family. Homodimer. Homooligomer. Interacts with UGT1A1, UGT1A3, UGT1A6, UGT1A7, UGT1A8, UGT1A9 and UGT1A10 to form heterodimers. Isoform 1 interacts with isoform 2/i2 suggesting that oligomerization is involved in negative regulation of transferase activity by isoform 2. Isoform 1 also interacts with respective i2 isoforms of UGT1A1, UGT1A3, UGT1A6, UGT1A7, UGT1A8, UGT1A9 and UGT1A10. As to expression, expressed in liver. Expressed in kidney, colon and small intestine. Not expressed in esophagus. Not expressed in skin. Expressed in liver, kidney, colon, esophagus and small intestine.

The protein localises to the endoplasmic reticulum membrane. It catalyses the reaction glucuronate acceptor + UDP-alpha-D-glucuronate = acceptor beta-D-glucuronoside + UDP + H(+). The enzyme catalyses calcidiol + UDP-alpha-D-glucuronate = calcidiol 25-O-(beta-D-glucuronide) + UDP + H(+). It carries out the reaction calcidiol + UDP-alpha-D-glucuronate = calcidiol 3-O-(beta-D-glucuronide) + UDP + H(+). The catalysed reaction is calcitriol + UDP-alpha-D-glucuronate = calcitriol 25-O-(beta-D-glucuronide) + UDP + H(+). It catalyses the reaction (5Z,8Z,11Z,14Z)-eicosatetraenoate + UDP-alpha-D-glucuronate = O-[(5Z),(8Z),(11Z),(14Z)-eicosatetraenoyl]-beta-D-glucuronate + UDP. The enzyme catalyses 15-hydroxy-(5Z,8Z,11Z,13E)-eicosatetraenoate + UDP-alpha-D-glucuronate = 15-O-(beta-D-glucuronosyl)-(5Z,8Z,11Z,14Z)-eicosatetraenoate + UDP + H(+). It carries out the reaction 20-hydroxy-(5Z,8Z,11Z,14Z)-eicosatetraenoate + UDP-alpha-D-glucuronate = 20-O-(beta-D-glucuronosyl)-(5Z,8Z,11Z,14Z)-eicosatetraenoate + UDP + H(+). Functionally, UDP-glucuronosyltransferase (UGT) that catalyzes phase II biotransformation reactions in which lipophilic substrates are conjugated with glucuronic acid to increase the metabolite's water solubility, thereby facilitating excretion into either the urine or bile. Essential for the elimination and detoxification of drugs, xenobiotics and endogenous compounds. Involved in the glucuronidation of calcidiol, which is the major circulating form of vitamin D3 essential for the regulation of calcium and phosphate homeostasis. Also glucuronidates the biologically active form of vitamin D3, calcitriol, probably leading to its biliary transport and intestinal reabsorption. Involved in the glucuronidation of arachidonic acid (AA) and AA-derived eicosanoids including 15-HETE, 20-HETE and PGB1. In terms of biological role, lacks UDP-glucuronosyltransferase (UGT) activity but acts as a negative regulator of isoform 1. This chain is UDP-glucuronosyltransferase 1A4, found in Homo sapiens (Human).